The primary structure comprises 218 residues: Small ribosomal subunit protein uS3c (218 aa).

One can recognise a KH type-2 domain in the interval 43 to 118; that stretch reads IKNYVQKNPR…RLNIAIARIS (76 aa).

Belongs to the universal ribosomal protein uS3 family. In terms of assembly, part of the 30S ribosomal subunit.

It is found in the plastid. Its subcellular location is the chloroplast. This Acorus calamus (Sweet flag) protein is Small ribosomal subunit protein uS3c (rps3).